A 153-amino-acid polypeptide reads, in one-letter code: Bacteriohemerythrin (153 aa).

The Fe cation site is built by histidine 21, histidine 57, glutamate 61, histidine 76, histidine 80, histidine 115, and aspartate 120.

This sequence belongs to the hemerythrin family. As to quaternary structure, monomer.

Oxygen-binding protein. May be involved in a storage mechanism or for delivery to oxygen-requiring enzymes. The oxygen-binding site contains two iron atoms. The protein is Bacteriohemerythrin of Pseudomonas paraeruginosa (strain DSM 24068 / PA7) (Pseudomonas aeruginosa (strain PA7)).